The sequence spans 627 residues: 1-deoxy-D-xylulose-5-phosphate synthase (627 aa).

Residues His74 and 115–117 (GHA) contribute to the thiamine diphosphate site. Asp146 is a Mg(2+) binding site. Thiamine diphosphate contacts are provided by residues 147–148 (AA), Asn175, Phe284, and Glu364. Asn175 provides a ligand contact to Mg(2+).

Belongs to the transketolase family. DXPS subfamily. As to quaternary structure, homodimer. The cofactor is Mg(2+). Thiamine diphosphate is required as a cofactor.

It catalyses the reaction D-glyceraldehyde 3-phosphate + pyruvate + H(+) = 1-deoxy-D-xylulose 5-phosphate + CO2. It participates in metabolic intermediate biosynthesis; 1-deoxy-D-xylulose 5-phosphate biosynthesis; 1-deoxy-D-xylulose 5-phosphate from D-glyceraldehyde 3-phosphate and pyruvate: step 1/1. Its function is as follows. Catalyzes the acyloin condensation reaction between C atoms 2 and 3 of pyruvate and glyceraldehyde 3-phosphate to yield 1-deoxy-D-xylulose-5-phosphate (DXP). The polypeptide is 1-deoxy-D-xylulose-5-phosphate synthase (Acidobacterium capsulatum (strain ATCC 51196 / DSM 11244 / BCRC 80197 / JCM 7670 / NBRC 15755 / NCIMB 13165 / 161)).